The chain runs to 331 residues: POU domain, class 4, transcription factor 3 (331 aa).

Low complexity predominate over residues 81-97 (TSSSSTVPISHPSSNLP). The disordered stretch occupies residues 81–108 (TSSSSTVPISHPSSNLPSHHHHHLSHQT). A POU-specific domain is found at 172–249 (DVESDPRELE…VLQAWLEEAE (78 aa)). Positions 267–326 (RKRKRTSIAAPEKRSLEAYFAIQPRPSSEKIAAIAEKLDLKKNVVRVWFCNQRQKQKRMK) form a DNA-binding region, homeobox.

It belongs to the POU transcription factor family. Class-4 subfamily. Interaction with ISL1. As to expression, expressed in the nervous system. Expressed in the otic vesicle during embryogenesis. Expressed in the adult retina in a subset of retinal ganglion cells (RGCs), and at a lower level in the adult tectum. Not expressed in the adult olfactory bulb.

It localises to the nucleus. Its subcellular location is the cytoplasm. In terms of biological role, acts as a transcriptional activator. Acts by binding to sequences related to the consensus octamer motif 5'-ATGCAAAT-3' in the regulatory regions of its target genes. May play a role in specifying terminally differentiated neuronal phenotypes. The chain is POU domain, class 4, transcription factor 3 (pou4f3) from Danio rerio (Zebrafish).